Reading from the N-terminus, the 232-residue chain is 5'-methylthioadenosine/S-adenosylhomocysteine nucleosidase (232 aa).

E12 acts as the Proton acceptor in catalysis. Residues G78, M153, and 174–175 (ME) contribute to the substrate site. Residue D198 is the Proton donor of the active site.

The protein belongs to the PNP/UDP phosphorylase family. MtnN subfamily.

It catalyses the reaction S-adenosyl-L-homocysteine + H2O = S-(5-deoxy-D-ribos-5-yl)-L-homocysteine + adenine. The enzyme catalyses S-methyl-5'-thioadenosine + H2O = 5-(methylsulfanyl)-D-ribose + adenine. It carries out the reaction 5'-deoxyadenosine + H2O = 5-deoxy-D-ribose + adenine. The protein operates within amino-acid biosynthesis; L-methionine biosynthesis via salvage pathway; S-methyl-5-thio-alpha-D-ribose 1-phosphate from S-methyl-5'-thioadenosine (hydrolase route): step 1/2. Catalyzes the irreversible cleavage of the glycosidic bond in both 5'-methylthioadenosine (MTA) and S-adenosylhomocysteine (SAH/AdoHcy) to adenine and the corresponding thioribose, 5'-methylthioribose and S-ribosylhomocysteine, respectively. Also cleaves 5'-deoxyadenosine, a toxic by-product of radical S-adenosylmethionine (SAM) enzymes, into 5-deoxyribose and adenine. In Anoxybacillus flavithermus (strain DSM 21510 / WK1), this protein is 5'-methylthioadenosine/S-adenosylhomocysteine nucleosidase.